Consider the following 127-residue polypeptide: Translation initiation factor 5A (127 aa).

A Hypusine modification is found at Lys-36.

The protein belongs to the eIF-5A family.

Its subcellular location is the cytoplasm. Functions by promoting the formation of the first peptide bond. The polypeptide is Translation initiation factor 5A (eif5a) (Halobacterium salinarum (strain ATCC 700922 / JCM 11081 / NRC-1) (Halobacterium halobium)).